Reading from the N-terminus, the 336-residue chain is tRNA N6-adenosine threonylcarbamoyltransferase (336 aa).

H114 and H118 together coordinate Fe cation. Substrate-binding positions include 136-140, D169, G182, D186, and N275; that span reads LVSGG. D301 is a binding site for Fe cation.

This sequence belongs to the KAE1 / TsaD family. Fe(2+) is required as a cofactor.

It is found in the cytoplasm. The enzyme catalyses L-threonylcarbamoyladenylate + adenosine(37) in tRNA = N(6)-L-threonylcarbamoyladenosine(37) in tRNA + AMP + H(+). In terms of biological role, required for the formation of a threonylcarbamoyl group on adenosine at position 37 (t(6)A37) in tRNAs that read codons beginning with adenine. Is involved in the transfer of the threonylcarbamoyl moiety of threonylcarbamoyl-AMP (TC-AMP) to the N6 group of A37, together with TsaE and TsaB. TsaD likely plays a direct catalytic role in this reaction. This is tRNA N6-adenosine threonylcarbamoyltransferase from Streptococcus pneumoniae (strain P1031).